Reading from the N-terminus, the 229-residue chain is Octanoyltransferase (229 aa).

The BPL/LPL catalytic domain maps to 47–225 (PSSPEAVWIL…SLAARFHLAW (179 aa)). Substrate is bound by residues 89-96 (RGGEVTHH), 156-158 (AIG), and 169-171 (GLA). Residue C187 is the Acyl-thioester intermediate of the active site.

Belongs to the LipB family.

The protein localises to the cytoplasm. It carries out the reaction octanoyl-[ACP] + L-lysyl-[protein] = N(6)-octanoyl-L-lysyl-[protein] + holo-[ACP] + H(+). Its pathway is protein modification; protein lipoylation via endogenous pathway; protein N(6)-(lipoyl)lysine from octanoyl-[acyl-carrier-protein]: step 1/2. Functionally, catalyzes the transfer of endogenously produced octanoic acid from octanoyl-acyl-carrier-protein onto the lipoyl domains of lipoate-dependent enzymes. Lipoyl-ACP can also act as a substrate although octanoyl-ACP is likely to be the physiological substrate. This Synechococcus sp. (strain CC9902) protein is Octanoyltransferase.